A 657-amino-acid chain; its full sequence is 9-cis-epoxycarotenoid dioxygenase NCED9, chloroplastic (657 aa).

Residues H357, H406, H471, and H642 each contribute to the Fe cation site.

The protein belongs to the carotenoid oxygenase family. Fe(2+) is required as a cofactor. Expressed in developing siliques, embryo and endosperm.

The protein localises to the plastid. Its subcellular location is the chloroplast stroma. The enzyme catalyses a 9-cis-epoxycarotenoid + O2 = a 12'-apo-carotenal + 2-cis,4-trans-xanthoxin. The catalysed reaction is 9-cis-violaxanthin + O2 = (3S,5R,6S)-5,6-epoxy-3-hydroxy-5,6-dihydro-12'-apo-beta-caroten-12'-al + 2-cis,4-trans-xanthoxin. It catalyses the reaction 9'-cis-neoxanthin + O2 = (3S,5R,6R)-3,5-dihydroxy-6,7-didehydro-5,6-dihydro-12'-apo-beta-caroten-12'-al + 2-cis,4-trans-xanthoxin. In terms of biological role, has a 11,12(11',12') 9-cis epoxycarotenoid cleavage activity. Catalyzes the first step of abscisic-acid biosynthesis from carotenoids. Contributes probably to abscisic acid synthesis for the induction of seed dormancy. The polypeptide is 9-cis-epoxycarotenoid dioxygenase NCED9, chloroplastic (NCED9) (Arabidopsis thaliana (Mouse-ear cress)).